A 485-amino-acid polypeptide reads, in one-letter code: Probable cobyric acid synthase (485 aa).

Positions 250–435 constitute a GATase cobBQ-type domain; sequence EIEIAVIRLP…LHGLFDNKNI (186 aa). Cys328 (nucleophile) is an active-site residue. The active site involves His427.

It belongs to the CobB/CobQ family. CobQ subfamily.

It functions in the pathway cofactor biosynthesis; adenosylcobalamin biosynthesis. Catalyzes amidations at positions B, D, E, and G on adenosylcobyrinic A,C-diamide. NH(2) groups are provided by glutamine, and one molecule of ATP is hydrogenolyzed for each amidation. This Methanosarcina barkeri (strain Fusaro / DSM 804) protein is Probable cobyric acid synthase.